The chain runs to 219 residues: 2-hydroxy-3-keto-5-methylthiopentenyl-1-phosphate phosphatase (219 aa).

It belongs to the HAD-like hydrolase superfamily. MtnX family.

It carries out the reaction 2-hydroxy-5-methylsulfanyl-3-oxopent-1-enyl phosphate + H2O = 1,2-dihydroxy-5-(methylsulfanyl)pent-1-en-3-one + phosphate. It participates in amino-acid biosynthesis; L-methionine biosynthesis via salvage pathway; L-methionine from S-methyl-5-thio-alpha-D-ribose 1-phosphate: step 4/6. Dephosphorylates 2-hydroxy-3-keto-5-methylthiopentenyl-1-phosphate (HK-MTPenyl-1-P) yielding 1,2-dihydroxy-3-keto-5-methylthiopentene (DHK-MTPene). The chain is 2-hydroxy-3-keto-5-methylthiopentenyl-1-phosphate phosphatase from Bacillus thuringiensis subsp. konkukian (strain 97-27).